The primary structure comprises 602 residues: Elongation factor 4 (602 aa).

Positions 8 to 190 (DLIRNFSIVA…AIVHRLPPPK (183 aa)) constitute a tr-type G domain. GTP-binding positions include 20-25 (DHGKST) and 137-140 (NKID).

The protein belongs to the TRAFAC class translation factor GTPase superfamily. Classic translation factor GTPase family. LepA subfamily.

It localises to the cell inner membrane. The enzyme catalyses GTP + H2O = GDP + phosphate + H(+). Required for accurate and efficient protein synthesis under certain stress conditions. May act as a fidelity factor of the translation reaction, by catalyzing a one-codon backward translocation of tRNAs on improperly translocated ribosomes. Back-translocation proceeds from a post-translocation (POST) complex to a pre-translocation (PRE) complex, thus giving elongation factor G a second chance to translocate the tRNAs correctly. Binds to ribosomes in a GTP-dependent manner. The polypeptide is Elongation factor 4 (Cereibacter sphaeroides (strain ATCC 17029 / ATH 2.4.9) (Rhodobacter sphaeroides)).